The following is a 296-amino-acid chain: 3-methyl-2-oxobutanoate hydroxymethyltransferase (296 aa).

A compositionally biased stretch (low complexity) spans 1–14 (MTAPTPTPANAATP). Positions 1 to 29 (MTAPTPTPANAATPYGTLPPASPLPQRRP) are disordered. D71 and D114 together coordinate Mg(2+). Residues 71–72 (DS), D114, and K143 contribute to the 3-methyl-2-oxobutanoate site. E145 serves as a coordination point for Mg(2+). The Proton acceptor role is filled by E212.

Belongs to the PanB family. In terms of assembly, homodecamer; pentamer of dimers. It depends on Mg(2+) as a cofactor.

Its subcellular location is the cytoplasm. The enzyme catalyses 3-methyl-2-oxobutanoate + (6R)-5,10-methylene-5,6,7,8-tetrahydrofolate + H2O = 2-dehydropantoate + (6S)-5,6,7,8-tetrahydrofolate. It functions in the pathway cofactor biosynthesis; (R)-pantothenate biosynthesis; (R)-pantoate from 3-methyl-2-oxobutanoate: step 1/2. In terms of biological role, catalyzes the reversible reaction in which hydroxymethyl group from 5,10-methylenetetrahydrofolate is transferred onto alpha-ketoisovalerate to form ketopantoate. The chain is 3-methyl-2-oxobutanoate hydroxymethyltransferase from Paracidovorax citrulli (strain AAC00-1) (Acidovorax citrulli).